The chain runs to 532 residues: Exopolysaccharide phosphotransferase CpsY (532 aa).

This sequence belongs to the stealth family.

The protein is Exopolysaccharide phosphotransferase CpsY (cpsY) of Mycobacterium bovis (strain ATCC BAA-935 / AF2122/97).